We begin with the raw amino-acid sequence, 331 residues long: Ketol-acid reductoisomerase (NADP(+)) (331 aa).

The KARI N-terminal Rossmann domain maps to 2–181 (TKVYYEDAVK…GATRAGVIET (180 aa)). NADP(+)-binding positions include 25-28 (YGSQ), arginine 48, serine 52, and 82-85 (DETQ). Residue histidine 107 is part of the active site. Residue glycine 133 participates in NADP(+) binding. Residues 182 to 327 (TFKEETETDL…AELREMMPFV (146 aa)) form the KARI C-terminal knotted domain. Mg(2+) contacts are provided by aspartate 190, glutamate 194, glutamate 226, and glutamate 230. Substrate is bound at residue serine 251.

The protein belongs to the ketol-acid reductoisomerase family. Requires Mg(2+) as cofactor.

It carries out the reaction (2R)-2,3-dihydroxy-3-methylbutanoate + NADP(+) = (2S)-2-acetolactate + NADPH + H(+). The catalysed reaction is (2R,3R)-2,3-dihydroxy-3-methylpentanoate + NADP(+) = (S)-2-ethyl-2-hydroxy-3-oxobutanoate + NADPH + H(+). It participates in amino-acid biosynthesis; L-isoleucine biosynthesis; L-isoleucine from 2-oxobutanoate: step 2/4. Its pathway is amino-acid biosynthesis; L-valine biosynthesis; L-valine from pyruvate: step 2/4. In terms of biological role, involved in the biosynthesis of branched-chain amino acids (BCAA). Catalyzes an alkyl-migration followed by a ketol-acid reduction of (S)-2-acetolactate (S2AL) to yield (R)-2,3-dihydroxy-isovalerate. In the isomerase reaction, S2AL is rearranged via a Mg-dependent methyl migration to produce 3-hydroxy-3-methyl-2-ketobutyrate (HMKB). In the reductase reaction, this 2-ketoacid undergoes a metal-dependent reduction by NADPH to yield (R)-2,3-dihydroxy-isovalerate. The chain is Ketol-acid reductoisomerase (NADP(+)) from Listeria monocytogenes serovar 1/2a (strain ATCC BAA-679 / EGD-e).